The chain runs to 547 residues: MTGDKDPQSVSRPNYGSISHPPSSEPQQEPLRTTYLSEKIPIPDTEPGTFSLRKLWAFTGPGFLMSIAFLDPGNIESDLQAGAVAGFKLLWVLLWATVLGLLCQRLAARLGVVTGKDLGEICHLYYPKVPRTLLWLTIELAIVGSDMQEVIGTAIAFSLLSAGRIPLWGGVLITIVDTFFFLFLDNYGLRKLEAFFGILITIMALTFGYEYVVARPAQVALLQGLLLPSCPGCGRPELLQAVGIVGAIIMPHNIYLHSALVKSREIDRSRRPDIREANMYFLIEASIALSVSFFINLFVVAVFGQAFYQQTNEAAFNVCANSSLHDYAKIFPRNNLTVEVDIYQGGVMLGCVFGPAALYIWAVGLLAAGQSSTMTGTYAGQFVMEGFLRLRWSRFARVLLTRSCAILPTVLVVVFRDLKDLSGLNDLLNVLQSLLLPFAVLPILTFTSMPALMQEFANGRLSKAITSFIMALVCAINLYFVVIYLPSLPHPAYFILVALLAIVYLGLTTYLVWTCFIAHGVTLLAHSSHQHFLYGLPDVEEKGKISG.

Positions 1-30 (MTGDKDPQSVSRPNYGSISHPPSSEPQQEP) are disordered. Residues 1-54 (MTGDKDPQSVSRPNYGSISHPPSSEPQQEPLRTTYLSEKIPIPDTEPGTFSLRK) are Cytoplasmic-facing. Residues 8–17 (QSVSRPNYGS) are compositionally biased toward polar residues. The segment covering 21-30 (PPSSEPQQEP) has biased composition (low complexity). Residues 55–75 (LWAFTGPGFLMSIAFLDPGNI) traverse the membrane as a helical segment. Residues 76 to 81 (ESDLQA) are Extracellular-facing. Residues 82–102 (GAVAGFKLLWVLLWATVLGLL) traverse the membrane as a helical segment. Residues 103-139 (CQRLAARLGVVTGKDLGEICHLYYPKVPRTLLWLTIE) are Cytoplasmic-facing. Residues 140 to 160 (LAIVGSDMQEVIGTAIAFSLL) traverse the membrane as a helical segment. Residues 161-164 (SAGR) are Extracellular-facing. Residues 165 to 185 (IPLWGGVLITIVDTFFFLFLD) form a helical membrane-spanning segment. Topologically, residues 186-193 (NYGLRKLE) are cytoplasmic. The chain crosses the membrane as a helical span at residues 194-214 (AFFGILITIMALTFGYEYVVA). Over 215–240 (RPAQVALLQGLLLPSCPGCGRPELLQ) the chain is Extracellular. The helical transmembrane segment at 241–261 (AVGIVGAIIMPHNIYLHSALV) threads the bilayer. Over 262–286 (KSREIDRSRRPDIREANMYFLIEAS) the chain is Cytoplasmic. The helical transmembrane segment at 287–307 (IALSVSFFINLFVVAVFGQAF) threads the bilayer. Over 308–346 (YQQTNEAAFNVCANSSLHDYAKIFPRNNLTVEVDIYQGG) the chain is Extracellular. N-linked (GlcNAc...) asparagine glycosylation is found at Asn321 and Asn335. A helical transmembrane segment spans residues 347–367 (VMLGCVFGPAALYIWAVGLLA). Over 368–394 (AGQSSTMTGTYAGQFVMEGFLRLRWSR) the chain is Cytoplasmic. A helical membrane pass occupies residues 395–415 (FARVLLTRSCAILPTVLVVVF). The Extracellular portion of the chain corresponds to 416–432 (RDLKDLSGLNDLLNVLQ). The chain crosses the membrane as a helical span at residues 433 to 453 (SLLLPFAVLPILTFTSMPALM). The Cytoplasmic portion of the chain corresponds to 454 to 464 (QEFANGRLSKA). A helical membrane pass occupies residues 465–485 (ITSFIMALVCAINLYFVVIYL). The Extracellular segment spans residues 486 to 492 (PSLPHPA). A helical membrane pass occupies residues 493–513 (YFILVALLAIVYLGLTTYLVW). Residues 514-547 (TCFIAHGVTLLAHSSHQHFLYGLPDVEEKGKISG) are Cytoplasmic-facing.

Belongs to the NRAMP family.

The protein localises to the late endosome membrane. Its subcellular location is the lysosome membrane. The enzyme catalyses Zn(2+)(in) + H(+)(out) = Zn(2+)(out) + H(+)(in). The catalysed reaction is Fe(2+)(in) + H(+)(out) = Fe(2+)(out) + H(+)(in). It carries out the reaction Mn(2+)(in) + H(+)(out) = Mn(2+)(out) + H(+)(in). In terms of biological role, macrophage-specific antiporter that fluxes metal ions in either direction against a proton gradient. Localized to late endosomal lysosomal membranes, delivers bivalent cations from the cytosol into these acidic compartments where they may directly affect antimicrobial activity. Involved in iron metabolism and host natural resistance to infection with intracellular parasites. Pathogen resistance involves sequestration of Fe(2+) and Mn(2+), cofactors of both prokaryotic and eukaryotic catalases and superoxide dismutases, not only to protect the macrophage against its own generation of reactive oxygen species, but to deny the cations to the pathogen for synthesis of its protective enzymes. The polypeptide is Natural resistance-associated macrophage protein 1 (SLC11A1) (Canis lupus familiaris (Dog)).